The following is a 620-amino-acid chain: Chaperone protein HscA homolog (620 aa).

It belongs to the heat shock protein 70 family.

Chaperone involved in the maturation of iron-sulfur cluster-containing proteins. Has a low intrinsic ATPase activity which is markedly stimulated by HscB. The chain is Chaperone protein HscA homolog from Pasteurella multocida (strain Pm70).